A 179-amino-acid chain; its full sequence is MSETAIQAVERKEKPKEVRSKGFVPGVIYGKGMDSISVKFDEKRLNKALQGRSQKAKISVQVAGETKQCFVGEIQKDITSGKTIHISMQVVEDDQVVKMKVPITFGGSEALSERKLIVLPYFSELELTGPSADIPEYVAVDVADKSLGDKITVADFMVSPSVSVLDDPEKIIAAITGAR.

It belongs to the bacterial ribosomal protein bL25 family. CTC subfamily. In terms of assembly, part of the 50S ribosomal subunit; part of the 5S rRNA/L5/L18/L25 subcomplex. Contacts the 5S rRNA. Binds to the 5S rRNA independently of L5 and L18.

Functionally, this is one of the proteins that binds to the 5S RNA in the ribosome where it forms part of the central protuberance. The polypeptide is Large ribosomal subunit protein bL25 (Desulfitobacterium hafniense (strain DSM 10664 / DCB-2)).